The chain runs to 380 residues: Alcohol dehydrogenase 2 (380 aa).

8 residues coordinate Zn(2+): Cys-48, Thr-50, His-70, Cys-100, Cys-103, Cys-106, Cys-114, and Cys-178. An alcohol is bound by residues Thr-50 and His-70. Thr-50 serves as a coordination point for NAD(+). Residues 203–208, Asp-227, Arg-232, Thr-273, Val-296, 296–298, Phe-323, and Arg-373 each bind NAD(+); these read GLGAVG and VGV.

Belongs to the zinc-containing alcohol dehydrogenase family. As to quaternary structure, homodimer. Homotetramer. Zn(2+) serves as cofactor.

Its subcellular location is the cytoplasm. The catalysed reaction is a primary alcohol + NAD(+) = an aldehyde + NADH + H(+). It catalyses the reaction a secondary alcohol + NAD(+) = a ketone + NADH + H(+). The polypeptide is Alcohol dehydrogenase 2 (ADH2) (Solanum lycopersicum (Tomato)).